Consider the following 600-residue polypeptide: Autophagy-related protein 22-2 (600 aa).

The interval 1–30 (MAFASPPASPPDEDGQARAPRYPGEDTTPT) is disordered. Helical transmembrane passes span 41 to 61 (YGIA…PLTL), 117 to 137 (SFAM…LISF), 149 to 168 (TLLV…FVFI), and 186 to 206 (CLGS…ASDP). The tract at residues 234–257 (SFDGDEPTHRPPTGLGLGGATGTS) is disordered. 4 consecutive transmembrane segments (helical) span residues 271-291 (GVGL…LLLF), 304-324 (TLPL…FTMV), 378-398 (VIVF…VSGT), and 414-434 (VALL…LWPI). A glycan (N-linked (GlcNAc...) asparagine) is linked at N444. The next 4 membrane-spanning stretches (helical) occupy residues 449–469 (VCIA…IPLF), 484–506 (YPLA…SFFG), 526–546 (KGSS…TGQV), and 549–569 (GFFF…MVDA).

The protein belongs to the ATG22 family.

It localises to the vacuole membrane. Its function is as follows. Vacuolar effluxer which mediate the efflux of amino acids resulting from autophagic degradation. The release of autophagic amino acids allows the maintenance of protein synthesis and viability during nitrogen starvation. This is Autophagy-related protein 22-2 (atg22-2) from Aspergillus niger (strain ATCC MYA-4892 / CBS 513.88 / FGSC A1513).